The following is a 262-amino-acid chain: Type III pantothenate kinase (262 aa).

5-12 (DAGNTRSK) serves as a coordination point for ATP. Residues Y102 and 110 to 113 (GSDR) each bind substrate. The Proton acceptor role is filled by D112. D132 contributes to the K(+) binding site. T135 is a binding site for ATP. Position 190 (T190) interacts with substrate.

This sequence belongs to the type III pantothenate kinase family. In terms of assembly, homodimer. NH4(+) is required as a cofactor. Requires K(+) as cofactor.

It is found in the cytoplasm. The enzyme catalyses (R)-pantothenate + ATP = (R)-4'-phosphopantothenate + ADP + H(+). It functions in the pathway cofactor biosynthesis; coenzyme A biosynthesis; CoA from (R)-pantothenate: step 1/5. In terms of biological role, catalyzes the phosphorylation of pantothenate (Pan), the first step in CoA biosynthesis. This Idiomarina loihiensis (strain ATCC BAA-735 / DSM 15497 / L2-TR) protein is Type III pantothenate kinase.